Reading from the N-terminus, the 841-residue chain is Serine/threonine-protein kinase/endoribonuclease IRE1a (841 aa).

An N-terminal signal peptide occupies residues 1 to 30 (MPPRCPFLRHLFFLLLLLSPWIMSPCGGAA). Residues 31–323 (DDVTYPIVPS…KQKYTYLFGQ (293 aa)) lie on the Lumenal side of the membrane. N-linked (GlcNAc...) asparagine glycosylation is found at Asn100, Asn104, Asn119, Asn132, and Asn221. The chain crosses the membrane as a helical span at residues 324–344 (WSPVKLLAPLVLLGVVVSVFI). The Cytoplasmic segment spans residues 345 to 841 (KKFSSRGSDV…FRKYFKCDII (497 aa)). The tract at residues 352 to 382 (SDVSLKAGPSKKKKNRKSAKDTNRQSVPRGQ) is disordered. In terms of domain architecture, Protein kinase spans 414-704 (FLSSKEIAKG…ATEVLLHPMF (291 aa)). ATP-binding positions include 420-428 (IAKGSNGTV) and Lys442. Asp570 (proton acceptor) is an active-site residue. The region spanning 707 to 838 (SEMRLSFLRD…EEVFRKYFKC (132 aa)) is the KEN domain.

The protein belongs to the protein kinase superfamily. Ser/Thr protein kinase family. Homodimer; disulfide-linked. Dimer formation is driven by hydrophobic interactions within the N-terminal luminal domains and stabilized by disulfide bridges. It depends on Mg(2+) as a cofactor. Autophosphorylated. As to expression, ubiquitous. Detected in the vascular bundles of young plants, leaves, roots, seedlings and in the receptacles of flowers and vascular bundles of the petals.

It localises to the endoplasmic reticulum membrane. The catalysed reaction is L-seryl-[protein] + ATP = O-phospho-L-seryl-[protein] + ADP + H(+). It carries out the reaction L-threonyl-[protein] + ATP = O-phospho-L-threonyl-[protein] + ADP + H(+). With respect to regulation, the kinase domain is activated by trans-autophosphorylation. Kinase activity is required for activation of the endoribonuclease domain. Senses unfolded proteins in the lumen of the endoplasmic reticulum via its N-terminal domain which leads to enzyme auto-activation. The active endoribonuclease domain splices bZIP60 mRNA to generate a new C-terminus, converting it into a potent unfolded-protein response transcriptional activator which then induces transcription of UPR target genes. Involved in organ growth regulation. Plays a role in plant immunity and abiotic stress responses. This is Serine/threonine-protein kinase/endoribonuclease IRE1a (IRE1A) from Arabidopsis thaliana (Mouse-ear cress).